The primary structure comprises 341 residues: MEVSRKKIYNPNSTESVNERKIFGGNPTSMFDLNKIKYQWADHLWKTMLANTWFAEEVSMNDDKRDYLKLSAEEKIGYDRALAQLIFMDSLQANNLIDNINPFITSPEINLCLVRQAYEEALHSHAYAVMVESISANTEEIYDMWRNDMQLKSKNDYIAQVYMELAKNPTEENILKALFANQILEGIYFYSGFSYFYTLARSGKMLGSAQMIRFIQRDEVTHLILFQNMINALRNERADLFTPQLINEVIEMFKKAVEIEASWGDYITQGKILGLTSSLIEQYIQFLADSRLSKVGIAKVYGVQHPIKWVESFSSFNEQRSNFFEARVSNYAKGSVSFDDF.

Residues D89, E120, and H123 each coordinate Fe cation. Y127 is a catalytic residue. Residues E185, E219, and H222 each coordinate Fe cation.

Belongs to the ribonucleoside diphosphate reductase small chain family. In terms of assembly, tetramer of two alpha and two beta subunits. Requires Fe cation as cofactor.

It carries out the reaction a 2'-deoxyribonucleoside 5'-diphosphate + [thioredoxin]-disulfide + H2O = a ribonucleoside 5'-diphosphate + [thioredoxin]-dithiol. In terms of biological role, provides the precursors necessary for DNA synthesis. Catalyzes the biosynthesis of deoxyribonucleotides from the corresponding ribonucleotides. The chain is Ribonucleoside-diphosphate reductase subunit beta (nrdB) from Helicobacter pylori (strain J99 / ATCC 700824) (Campylobacter pylori J99).